The primary structure comprises 182 residues: Small ribosomal subunit protein uS9 (182 aa).

This sequence belongs to the universal ribosomal protein uS9 family.

The polypeptide is Small ribosomal subunit protein uS9 (Corynebacterium glutamicum (strain R)).